The sequence spans 154 residues: Vimentin (154 aa).

Residues 1–13 (MSTRSVSSSSYRR) show a composition bias toward low complexity. A disordered region spans residues 1–31 (MSTRSVSSSSYRRMFGGPGTASRPSSTRSYV). S2 is subject to N-acetylserine. Positions 2–95 (STRSVSSSSY…FSLADAINTE (94 aa)) are head. Position 5 is a phosphoserine (S5). S7 carries the post-translational modification Phosphoserine; by PKA and PKC; alternate. The O-linked (GlcNAc) serine; alternate glycan is linked to S7. S8 carries the phosphoserine modification. 2 positions are modified to phosphoserine; by PKC: S9 and S10. Position 20 is a phosphothreonine (T20). The residue at position 25 (S25) is a Phosphoserine; by PKA and PKC. S26 is subject to Phosphoserine; by PKC. O-linked (GlcNAc) threonine glycosylation is present at T33. S34 carries an O-linked (GlcNAc) serine; alternate glycan. Phosphoserine; by PKC; alternate is present on S34. S39 carries the phosphoserine; by CaMK2, PKA, PKC and ROCK2 modification. Phosphoserine; by PKC is present on S42. At S49 the chain carries Phosphoserine. Y53 bears the Phosphotyrosine mark. S55 is modified (phosphoserine). At S56 the chain carries Phosphoserine; by CDK5 and CDK1. Y61 carries the phosphotyrosine modification. S66 bears the Phosphoserine; by PKA and PKC mark. Position 72 is a phosphoserine; by AURKB and ROCK2 (S72). The residue at position 83 (S83) is a Phosphoserine; by CaMK2. S87 bears the Phosphoserine mark. Positions 96 to 131 (FKNTRTNEKVELQELNDRFANYIDKVRFLEQQNKIL) are coil 1A. The stretch at 96-131 (FKNTRTNEKVELQELNDRFANYIDKVRFLEQQNKIL) forms a coiled coil. In terms of domain architecture, IF rod spans 103–154 (EKVELQELNDRFANYIDKVRFLEQQNKILLAELEQLKGQGKSRLGHLYEEEM). Residue K104 forms a Glycyl lysine isopeptide (Lys-Gly) (interchain with G-Cter in SUMO2) linkage. Y117 is subject to Phosphotyrosine. 3 positions are modified to N6-acetyllysine; alternate: K120, K129, and K139. N6-succinyllysine; alternate occurs at positions 120 and 129. Residues K120, K129, and K139 each participate in a glycyl lysine isopeptide (Lys-Gly) (interchain with G-Cter in SUMO2); alternate cross-link. The segment at 132-153 (LAELEQLKGQGKSRLGHLYEEE) is linker 1. S144 is modified (phosphoserine). A region of interest (coil 1B) is located at residue M154.

This sequence belongs to the intermediate filament family. As to quaternary structure, homomer assembled from elementary dimers. Identified in complexes that contain VIM, EZR, AHNAK, BFSP1, BFSP2, ANK2, PLEC, PRX and spectrin. Interacts with BCAS3. Interacts with LGSN. Interacts with SYNM. Interacts (via rod region) with PLEC (via CH 1 domain). Interacts with STK33. Interacts with LARP6. Interacts with RAB8B. Interacts with TOR1A; the interaction associates TOR1A with the cytoskeleton. Interacts with TOR1AIP1. Interacts with TOR1AIP1. Interacts with DIAPH1. Interacts with EPPK1; interaction is dependent of higher-order structure of intermediate filament. Interacts with the non-receptor tyrosine kinase SRMS; the interaction leads to phosphorylation of VIM. Interacts with NOD2. Interacts (via head region) with CORO1C. Interacts with HDGF. Interacts with PRKCE (via phorbol-ester/DAG-type 2 domain). Interacts with BFSP2. Interacts with PPL. Interacts with PKP1 and PKP2. Interacts with SCRIB (via PDZ domains); the interaction protects SCRIB from proteasomal degradation and facilitates SCRIB localization to intermediate filaments, the interaction is reduced by cell contact inhibition. One of the most prominent phosphoproteins in various cells of mesenchymal origin. Phosphorylation is enhanced during cell division, at which time vimentin filaments are significantly reorganized. Phosphorylation by PKN1 inhibits the formation of filaments. Filament disassembly during mitosis is promoted by phosphorylation at Ser-55 as well as by nestin. Phosphorylated at Ser-56 by CDK5 during neutrophil secretion in the cytoplasm. Phosphorylated by STK33. Phosphorylated on tyrosine residues by SRMS.

The protein resides in the cytoplasm. It is found in the cytoskeleton. It localises to the nucleus matrix. The protein localises to the cell membrane. In terms of biological role, vimentins are class-III intermediate filaments found in various non-epithelial cells, especially mesenchymal cells. Vimentin is attached to the nucleus, endoplasmic reticulum, and mitochondria, either laterally or terminally. Plays a role in cell directional movement, orientation, cell sheet organization and Golgi complex polarization at the cell migration front. Protects SCRIB from proteasomal degradation and facilitates its localization to intermediate filaments in a cell contact-mediated manner. Involved with LARP6 in the stabilization of type I collagen mRNAs for CO1A1 and CO1A2. This is Vimentin (VIM) from Ovis aries (Sheep).